Reading from the N-terminus, the 341-residue chain is Ribosomal RNA small subunit methyltransferase C (341 aa).

The protein belongs to the methyltransferase superfamily. RsmC family. As to quaternary structure, monomer.

The protein localises to the cytoplasm. It carries out the reaction guanosine(1207) in 16S rRNA + S-adenosyl-L-methionine = N(2)-methylguanosine(1207) in 16S rRNA + S-adenosyl-L-homocysteine + H(+). Specifically methylates the guanine in position 1207 of 16S rRNA in the 30S particle. This Shewanella pealeana (strain ATCC 700345 / ANG-SQ1) protein is Ribosomal RNA small subunit methyltransferase C.